The primary structure comprises 514 residues: Probable lipid II flippase MurJ (514 aa).

The next 14 membrane-spanning stretches (helical) occupy residues 3–23 (ILKS…FGFF), 25–45 (DVLI…FIAF), 92–112 (ILVL…IIFI), 130–150 (LLKI…CSSI), 157–177 (FFIP…FSFF), 186–206 (IISL…YQFP), 245–265 (ISLI…ISWI), 271–291 (LIEF…FTSF), 315–335 (LILS…LVII), 354–374 (LELY…VSAF), 386–406 (ISIL…FYFQ), 409–429 (GLAL…YWKL), 448–468 (LLIA…FIPS), and 481–501 (LFTI…FLGI).

This sequence belongs to the MurJ/MviN family.

It is found in the cell inner membrane. It participates in cell wall biogenesis; peptidoglycan biosynthesis. In terms of biological role, involved in peptidoglycan biosynthesis. Transports lipid-linked peptidoglycan precursors from the inner to the outer leaflet of the cytoplasmic membrane. In Buchnera aphidicola subsp. Schizaphis graminum (strain Sg), this protein is Probable lipid II flippase MurJ.